The following is a 332-amino-acid chain: MKSNLENFNFQTSIREQVVPSRKKVILPAWLEVAKPRLIPLLLATTLGGMALTEEWPLSSPKLICTLGGGALAAAAAGALNCLWEMDLDKRMKRTSNRALPSGKLSFNTVFLGAVSCTFAAAMLLISGVNYLAAGLTLLGLCSYVILYTIILKPRTTQNIVFGGVAGAIPPLVGASAATGHVGLSGWWLFGLVMLWTPAHFWALAILLKDDYASVGIPMLPSVKGSAFTVKAISRYGWATVFMSILGVFALPEGGLLYVIMLLPFNGRLLQLINRLKSSPDDLEKAKGLFRWSILYMFGICLLLLISRTQLSVDFEQQSMQIFLSLKAYFNI.

7 consecutive transmembrane segments (helical) span residues 63 to 83 (LICTLGGGALAAAAAGALNCL), 109 to 129 (TVFLGAVSCTFAAAMLLISGV), 132 to 152 (LAAGLTLLGLCSYVILYTIIL), 160 to 180 (IVFGGVAGAIPPLVGASAATG), 188 to 208 (WLFGLVMLWTPAHFWALAILL), 245 to 265 (ILGVFALPEGGLLYVIMLLPF), and 286 to 306 (AKGLFRWSILYMFGICLLLLI).

Belongs to the UbiA prenyltransferase family. Protoheme IX farnesyltransferase subfamily.

It localises to the cell inner membrane. It carries out the reaction heme b + (2E,6E)-farnesyl diphosphate + H2O = Fe(II)-heme o + diphosphate. The protein operates within porphyrin-containing compound metabolism; heme O biosynthesis; heme O from protoheme: step 1/1. Functionally, converts heme B (protoheme IX) to heme O by substitution of the vinyl group on carbon 2 of heme B porphyrin ring with a hydroxyethyl farnesyl side group. The polypeptide is Protoheme IX farnesyltransferase (Prochlorococcus marinus (strain MIT 9515)).